Consider the following 264-residue polypeptide: ATP synthase subunit a (264 aa).

6 consecutive transmembrane segments (helical) span residues 27–47 (VHLDTLLFSIISGAIFLFVFS), 87–107 (VGPLALTIFCWVFIMNAIDLI), 131–151 (DISGTLGLSIGVFFLIIFYTI), 172–192 (LLIPVNLALESVTLLAKPVSL), 196–216 (LFGNMYAGELIFILIAVMYMA), and 230–250 (LAWAIFHILVITLQAFIFMML).

Belongs to the ATPase A chain family. As to quaternary structure, F-type ATPases have 2 components, CF(1) - the catalytic core - and CF(0) - the membrane proton channel. CF(1) has five subunits: alpha(3), beta(3), gamma(1), delta(1), epsilon(1). CF(0) has three main subunits: a(1), b(2) and c(9-12). The alpha and beta chains form an alternating ring which encloses part of the gamma chain. CF(1) is attached to CF(0) by a central stalk formed by the gamma and epsilon chains, while a peripheral stalk is formed by the delta and b chains.

The protein resides in the cell inner membrane. Its function is as follows. Key component of the proton channel; it plays a direct role in the translocation of protons across the membrane. The sequence is that of ATP synthase subunit a from Pasteurella multocida (strain Pm70).